The chain runs to 485 residues: Telomeric DNA-binding factor trf1 (485 aa).

Residues 1 to 20 (MSKRSLDPSDDFKGQKRLAI) are compositionally biased toward basic and acidic residues. Positions 1-23 (MSKRSLDPSDDFKGQKRLAIDPE) are disordered. Residues 400 to 457 (RRVANRRSWTKEEEEALLDGLDLVKGPRWSQILELYGPGGKKSEVLKYRNQVQLKDKA) form the HTH myb-type domain. The H-T-H motif DNA-binding region spans 428 to 453 (WSQILELYGPGGKKSEVLKYRNQVQL).

Homodimer.

It localises to the nucleus. In terms of biological role, binds the telomeric double-stranded TTACAGG repeat and regulates telomere length. In Schizosaccharomyces pombe (strain 972 / ATCC 24843) (Fission yeast), this protein is Telomeric DNA-binding factor trf1 (trf1).